Reading from the N-terminus, the 507-residue chain is Transcription factor SOX-9 (507 aa).

Disordered stretches follow at residues 1 to 67 (MNLL…SEED) and 160 to 250 (RLRV…AGKV). Positions 30 to 41 (SAGSPCPSGSGS) are enriched in low complexity. Polar residues predominate over residues 42–52 (DTENTRPQENT). Composition is skewed to basic and acidic residues over residues 56–67 (GEPDLKKESEED) and 160–174 (RLRVQHKKDHPDYKY). The interval 63 to 103 (ESEEDKFPVCIREAVSQVLKGYDWTLVPMPVRVNGSSKNKP) is dimerization (DIM). The interval 63-103 (ESEEDKFPVCIREAVSQVLKGYDWTLVPMPVRVNGSSKNKP) is PQA. Phosphoserine; by PKA is present on S64. The segment at residues 105–173 (VKRPMNAFMV…QHKKDHPDYK (69 aa)) is a DNA-binding region (HMG box). S211 is subject to Phosphoserine; by PKA. The segment at 224–307 (PGEHSGQSQG…LPPNGHPGVP (84 aa)) is transactivation domain (TAM). 2 consecutive short sequence motifs (9aaTAD) follow at residues 275–284 (IGELSSDVIS) and 290–298 (DVNEFDQYL). The disordered stretch occupies residues 335-429 (WMSKQQAPPP…PFNLPHYSPS (95 aa)). A compositionally biased stretch (pro residues) spans 341-369 (APPPPPQQPPQAPQAPQAPPQQQAPPQQP). Residues 378–420 (HTLTTLSSEPGQSQRTHIKTEQLSPSHYSEQQQHSPQQISYSP) are compositionally biased toward polar residues. Positions 392 to 507 (RTHIKTEQLS…QPVYTQLTRP (116 aa)) are transactivation domain (TAC). K396 is covalently cross-linked (Glycyl lysine isopeptide (Lys-Gly) (interchain with G-Cter in ubiquitin)). The short motif at 458-466 (SGLYSTFTY) is the 9aaTAD 3 element. Positions 477-507 (PIADTSGVPSIPQTHSPQHWEQPVYTQLTRP) are disordered. Polar residues predominate over residues 483–507 (GVPSIPQTHSPQHWEQPVYTQLTRP).

Homodimer; homodimerization is required for activity. Interacts (via C-terminus) with ZNF219; forming a complex that binds to the COL2A1 promoter and activates COL2A1 expression. Interacts with DDRGK1. Interacts with EP300/p300. Interacts with beta-catenin (CTNNB1); inhibiting CTNNB1 activity by competing with the binding sites of TCF/LEF within CTNNB1. Acetylated; acetylation impairs nuclear localization and ability to transactivate expression of target genes. Deacetylated by SIRT1. Post-translationally, phosphorylation at Ser-64 and Ser-211 by PKA increases transcriptional activity and may help delay chondrocyte maturation downstream of PTHLH/PTHrP signaling. Phosphorylation at either Ser-64 or Ser-211 is required for sumoylation, but phosphorylation is not dependent on sumoylation. Phosphorylated on tyrosine residues; tyrosine dephosphorylation by PTPN11/SHP2 blocks SOX9 phosphorylation by PKA and subsequent SUMOylation. In terms of processing, sumoylated; phosphorylation at either Ser-64 or Ser-211 is required for sumoylation. Sumoylation is induced by BMP signaling pathway. Ubiquitinated; ubiquitination leads to proteasomal degradation and is negatively regulated by DDRGK1. In terms of tissue distribution, expressed in the intestinal epithelium (at protein level). Expressed in progenitor cells in various organs, including chondroprogenitors, osteoprogenitors and preadipocytes, but is not expressed in most differentiated cell types such as osteoblasts and adipocytes, with the exception of chondrocytes. Highly expressed in developing chondrogenic tissues. Also expressed in some non-chondrogenic tissues such as notochord, otic vesicle and neural tube.

Its subcellular location is the nucleus. In terms of biological role, transcription factor that plays a key role in chondrocytes differentiation and skeletal development. Specifically binds the 5'-ACAAAG-3' DNA motif present in enhancers and super-enhancers and promotes expression of genes important for chondrogenesis, including cartilage matrix protein-coding genes COL2A1, COL4A2, COL9A1, COL11A2 and ACAN, SOX5 and SOX6. Also binds to some promoter regions. Plays a central role in successive steps of chondrocyte differentiation. Absolutely required for precartilaginous condensation, the first step in chondrogenesis during which skeletal progenitors differentiate into prechondrocytes. Together with SOX5 and SOX6, required for overt chondrogenesis when condensed prechondrocytes differentiate into early stage chondrocytes, the second step in chondrogenesis. Later, required to direct hypertrophic maturation and block osteoblast differentiation of growth plate chondrocytes: maintains chondrocyte columnar proliferation, delays prehypertrophy and then prevents osteoblastic differentiation of chondrocytes by lowering beta-catenin (CTNNB1) signaling and RUNX2 expression. Also required for chondrocyte hypertrophy, both indirectly, by keeping the lineage fate of chondrocytes, and directly, by remaining present in upper hypertrophic cells and transactivating COL10A1 along with MEF2C. Low lipid levels are the main nutritional determinant for chondrogenic commitment of skeletal progenitor cells: when lipids levels are low, FOXO (FOXO1 and FOXO3) transcription factors promote expression of SOX9, which induces chondrogenic commitment and suppresses fatty acid oxidation. Mechanistically, helps, but is not required, to remove epigenetic signatures of transcriptional repression and deposit active promoter and enhancer marks at chondrocyte-specific genes. Acts in cooperation with the Hedgehog pathway-dependent GLI (GLI1 and GLI3) transcription factors. In addition to cartilage development, also acts as a regulator of proliferation and differentiation in epithelial stem/progenitor cells: involved in the lung epithelium during branching morphogenesis, by balancing proliferation and differentiation and regulating the extracellular matrix. Controls epithelial branching during kidney development. This is Transcription factor SOX-9 from Mus musculus (Mouse).